The following is a 333-amino-acid chain: Atrochrysone carboxyl ACP thioesterase MYCFIDRAFT_190111 (333 aa).

Residues H108, H110, D112, and H113 each contribute to the Zn(2+) site. Catalysis depends on D112, which acts as the Proton donor/acceptor.

It belongs to the metallo-beta-lactamase superfamily. Zn(2+) serves as cofactor.

The enzyme catalyses atrochrysone carboxyl-[ACP] + H2O = atrochrysone carboxylate + holo-[ACP] + H(+). It functions in the pathway secondary metabolite biosynthesis. Its function is as follows. Atrochrysone carboxyl ACP thioesterase; part of the gene cluster that mediates the biosynthesis of an emodin derivative that may be involved in black Sigatoka disease of banana. The pathway begins with the synthesis of atrochrysone thioester by the polyketide synthase PKS8-1. The atrochrysone carboxyl ACP thioesterase MYCFIDRAFT_190111 then breaks the thioester bond and releases the atrochrysone carboxylic acid from PKS8-1. The decarboxylase MYCFIDRAFT_34057 then catalyzes the concerted decarboxylation-elimination required to convert atochrysone carboxylic acid into emodin anthrone, which is further oxidized to emodin by the anthrone oxygenase MYCFIDRAFT_34418. The functions of the other tailoring enzymes as well as the final product of the cluster have still to be identified. The protein is Atrochrysone carboxyl ACP thioesterase MYCFIDRAFT_190111 of Pseudocercospora fijiensis (strain CIRAD86) (Black leaf streak disease fungus).